The sequence spans 381 residues: MAKIISIIGSTGSIGRQTLEAAKNLGIKVAALSANSNIDLLEKQVHEFKPDVVSVGNSELAKEMSNRLQGFGIEVLWGQDGMKRVVEHSEADTVVTSVVGTAGLIPTIHAIRHKKNIALANKETLVTAGQLVMEDAKKNNVKIFPVDSEHSAIYQCLLGNKDKQVEKIILTASGGPFRGKNIKELKNITPAQALKHPNWSMGNKITIDSATLMNKGLEVIEAKWLFQRDLDSIQVLVHPQSIIHSMVQYVDGSVMAQLGSPDMRIPIQLALTYPDRCQNNFNKLDFLKCPPLTFEEPDIDTFKCLRLAYKSLEIGGTMPAALNAANEIAVAAFLENHIGFTEIAETIEQVMQRHNVNICPCLEDIIEVDCWARTTARQLII.

T11, G12, S13, I14, N37, and N121 together coordinate NADPH. Residue K122 coordinates 1-deoxy-D-xylulose 5-phosphate. E123 provides a ligand contact to NADPH. Mn(2+) is bound at residue D147. Residues S148, E149, S173, and H196 each contribute to the 1-deoxy-D-xylulose 5-phosphate site. E149 lines the Mn(2+) pocket. Residue G202 participates in NADPH binding. 1-deoxy-D-xylulose 5-phosphate-binding residues include S209, N214, K215, and E218. A Mn(2+)-binding site is contributed by E218.

This sequence belongs to the DXR family. Mg(2+) serves as cofactor. Requires Mn(2+) as cofactor.

It catalyses the reaction 2-C-methyl-D-erythritol 4-phosphate + NADP(+) = 1-deoxy-D-xylulose 5-phosphate + NADPH + H(+). It participates in isoprenoid biosynthesis; isopentenyl diphosphate biosynthesis via DXP pathway; isopentenyl diphosphate from 1-deoxy-D-xylulose 5-phosphate: step 1/6. Catalyzes the NADPH-dependent rearrangement and reduction of 1-deoxy-D-xylulose-5-phosphate (DXP) to 2-C-methyl-D-erythritol 4-phosphate (MEP). This Ruminiclostridium cellulolyticum (strain ATCC 35319 / DSM 5812 / JCM 6584 / H10) (Clostridium cellulolyticum) protein is 1-deoxy-D-xylulose 5-phosphate reductoisomerase.